Reading from the N-terminus, the 306-residue chain is Homoserine O-succinyltransferase (306 aa).

The active-site Acyl-thioester intermediate is the C142. Substrate contacts are provided by K163 and S192. H233 functions as the Proton acceptor in the catalytic mechanism. E235 is a catalytic residue. R247 lines the substrate pocket.

This sequence belongs to the MetA family.

It is found in the cytoplasm. It catalyses the reaction L-homoserine + succinyl-CoA = O-succinyl-L-homoserine + CoA. It participates in amino-acid biosynthesis; L-methionine biosynthesis via de novo pathway; O-succinyl-L-homoserine from L-homoserine: step 1/1. Its function is as follows. Transfers a succinyl group from succinyl-CoA to L-homoserine, forming succinyl-L-homoserine. This is Homoserine O-succinyltransferase from Pelagibacterium halotolerans (strain DSM 22347 / JCM 15775 / CGMCC 1.7692 / B2).